We begin with the raw amino-acid sequence, 1352 residues long: Astrotactin-2 (1352 aa).

The disordered stretch occupies residues 1–31; it reads MAAAGARRSPGRGLGLRGRPRLGFHPGPPPP. The signal sequence occupies residues 1 to 51; the sequence is MAAAGARRSPGRGLGLRGRPRLGFHPGPPPPPPPPLLLLFLLLLPPPPLLA. Over 52–218 the chain is Lumenal; it reads GATAAAASRE…IVEEQMHILH (167 aa). Residue N180 is glycosylated (N-linked (GlcNAc...) asparagine). The helical transmembrane segment at 219–239 threads the bilayer; the sequence is ISVMGGLIALLLLLLVFTVAL. Over 240–447 the chain is Cytoplasmic; sequence YAQRRWQKRR…KGLLKSPVNK (208 aa). Disordered regions lie at residues 308 to 327 and 375 to 421; these read EEEE…DEFG and TPVE…ADDE. Over residues 383–392 the composition is skewed to polar residues; sequence QPASRSSTSA. The chain crosses the membrane as a helical span at residues 448-468; it reads TALTLIAVSSCILAMVCGNQM. Over 469–1352 the chain is Lumenal; the sequence is SCPLTVKVTL…RNTYGETKGR (884 aa). EGF-like domains are found at residues 523-563, 664-708, and 712-764; these read VRDL…HLCV, PVRD…SGCY, and KGID…KSCL. Disulfide bonds link C527–C539, C535–C546, C548–C562, C668–C681, C675–C692, C694–C707, C716–C728, C724–C748, and C750–C763. An N-linked (GlcNAc...) asparagine glycan is attached at N796. 3 disulfide bridges follow: C838–C1000, C929–C990, and C996–C1003. The N-linked (GlcNAc...) asparagine glycan is linked to N1033. Cystine bridges form between C1049-C1060, C1062-C1075, C1149-C1171, C1203-C1290, and C1311-C1334. A Fibronectin type-III domain is found at 1079–1201; that stretch reads PQPVLRLSPT…SELSTVTLRT (123 aa).

This sequence belongs to the astrotactin family. As to quaternary structure, interacts with ASTN1; the interaction is not calcium-dependent. Detected in cerebellum granule neurons; not detected in astroglia (at protein level). Detected primarily in cerebellum, and at lower levels in brain cortex, olfactory bulb, hindbrain and hippocampus dentate gyrus. Between 6 and 10 days after birth, when granule cell migration occurs in the cerebellum, detected in granule cell precursors in the external germinal layer, the molecular layer, the internal granule layer and in Purkinje neurons. Detected in postmitotic neurons in adult cerebellum.

The protein localises to the membrane. Its subcellular location is the perikaryon. It is found in the cytoplasm. It localises to the cell cortex. The protein resides in the early endosome. The protein localises to the late endosome. Its subcellular location is the cytoplasmic vesicle. It is found in the clathrin-coated vesicle. In terms of biological role, mediates recycling of the neuronal cell adhesion molecule ASTN1 to the anterior pole of the cell membrane in migrating neurons. Promotes ASTN1 internalization and intracellular transport of endocytosed ASTN1. Selectively binds inositol-4,5-bisphosphate, inositol-3,4,5-trisphosphate and inositol-1,3,4,5-tetrakisphosphate, suggesting it is recruited to membranes that contain lipids with a phosphoinositide headgroup. The protein is Astrotactin-2 (Astn2) of Mus musculus (Mouse).